Consider the following 200-residue polypeptide: Ribonuclease HII (200 aa).

The RNase H type-2 domain occupies 9–198 (ALIAGVDEVG…VQRVLAQAKG (190 aa)). A divalent metal cation contacts are provided by Asp-15, Glu-16, and Asp-107.

Belongs to the RNase HII family. It depends on Mn(2+) as a cofactor. Mg(2+) serves as cofactor.

The protein resides in the cytoplasm. It catalyses the reaction Endonucleolytic cleavage to 5'-phosphomonoester.. In terms of biological role, endonuclease that specifically degrades the RNA of RNA-DNA hybrids. The sequence is that of Ribonuclease HII from Pseudoalteromonas translucida (strain TAC 125).